A 477-amino-acid chain; its full sequence is Bifunctional protein HldE (477 aa).

Residues 1–318 (MKVTLPEFER…ENAVRGRADT (318 aa)) form a ribokinase region. Position 179 is an N6-acetyllysine (Lys-179). 195–198 (NLSE) serves as a coordination point for ATP. Asp-264 is an active-site residue. The cytidylyltransferase stretch occupies residues 344-477 (MTNGVFDILH…IKKIQQDKKG (134 aa)).

This sequence in the N-terminal section; belongs to the carbohydrate kinase PfkB family. In the C-terminal section; belongs to the cytidylyltransferase family. In terms of assembly, homodimer.

It catalyses the reaction D-glycero-beta-D-manno-heptose 7-phosphate + ATP = D-glycero-beta-D-manno-heptose 1,7-bisphosphate + ADP + H(+). The enzyme catalyses D-glycero-beta-D-manno-heptose 1-phosphate + ATP + H(+) = ADP-D-glycero-beta-D-manno-heptose + diphosphate. It participates in nucleotide-sugar biosynthesis; ADP-L-glycero-beta-D-manno-heptose biosynthesis; ADP-L-glycero-beta-D-manno-heptose from D-glycero-beta-D-manno-heptose 7-phosphate: step 1/4. It functions in the pathway nucleotide-sugar biosynthesis; ADP-L-glycero-beta-D-manno-heptose biosynthesis; ADP-L-glycero-beta-D-manno-heptose from D-glycero-beta-D-manno-heptose 7-phosphate: step 3/4. In terms of biological role, catalyzes the phosphorylation of D-glycero-D-manno-heptose 7-phosphate at the C-1 position to selectively form D-glycero-beta-D-manno-heptose-1,7-bisphosphate. Catalyzes the ADP transfer from ATP to D-glycero-beta-D-manno-heptose 1-phosphate, yielding ADP-D-glycero-beta-D-manno-heptose. The chain is Bifunctional protein HldE from Shigella flexneri serotype 5b (strain 8401).